Here is a 306-residue protein sequence, read N- to C-terminus: MGNLVIGSRGSELALWQANHIKERLKKECFIESEIQIVKTKGDKILDTPLNKIGGKGLFTKELEELLLKGAIDLAVHSLKDVPVVFEKGLDLACITKRADVRDTFLSVKFPDLMSLPKGAKVGTTSLRRSMQIKLKRQDLDTESLRGNVQTRLKKLECGEFDAIILAEAGLCRLEIQGAKYRKAFSVEEMIPSMGQGALGVEMLKNHKHFATLQKLNDEESAFCCHLEREFVKGLNGGCQIPIGVHASLMGDRVKIQAVLGLPNGKEVITKEKRGDKTKAFDLVQDLLEEFLQSGAKEILEKAQLF.

Cys-239 bears the S-(dipyrrolylmethanemethyl)cysteine mark.

It belongs to the HMBS family. As to quaternary structure, monomer. It depends on dipyrromethane as a cofactor.

The catalysed reaction is 4 porphobilinogen + H2O = hydroxymethylbilane + 4 NH4(+). It participates in porphyrin-containing compound metabolism; protoporphyrin-IX biosynthesis; coproporphyrinogen-III from 5-aminolevulinate: step 2/4. Functionally, tetrapolymerization of the monopyrrole PBG into the hydroxymethylbilane pre-uroporphyrinogen in several discrete steps. This chain is Porphobilinogen deaminase, found in Helicobacter pylori (strain G27).